Here is a 309-residue protein sequence, read N- to C-terminus: Bombesin receptor-activated protein C6orf89 homolog (309 aa).

Residues Met1–Arg59 lie on the Cytoplasmic side of the membrane. The chain crosses the membrane as a helical span at residues Ala60 to Tyr80. Topologically, residues Pro81 to Leu309 are extracellular.

In terms of assembly, homodimer.

Its subcellular location is the golgi apparatus membrane. It localises to the cytoplasm. Functionally, exhibits histone deacetylase (HDAC) enhancer properties. May play a role in progression through the cell cycle. This chain is Bombesin receptor-activated protein C6orf89 homolog, found in Danio rerio (Zebrafish).